Reading from the N-terminus, the 142-residue chain is Hemoglobin subunit alpha (142 aa).

The Globin domain maps to 2–142; the sequence is VLSPADKSNV…VSTVLTSKYR (141 aa). At Ser4 the chain carries Phosphoserine. Lys8 and Lys12 each carry N6-succinyllysine. An N6-acetyllysine; alternate modification is found at Lys17. Lys17 is modified (N6-succinyllysine; alternate). A Phosphotyrosine modification is found at Tyr25. The residue at position 36 (Ser36) is a Phosphoserine. Position 41 is an N6-succinyllysine (Lys41). Ser50 is subject to Phosphoserine. Residue His59 participates in O2 binding. Residue His88 coordinates heme b. A Phosphoserine modification is found at Ser103. Thr109 is subject to Phosphothreonine. 2 positions are modified to phosphoserine: Ser125 and Ser132. A phosphothreonine mark is found at Thr135 and Thr138. Phosphoserine is present on Ser139.

It belongs to the globin family. In terms of assembly, heterotetramer of two alpha chains and two beta chains. Red blood cells.

Involved in oxygen transport from the lung to the various peripheral tissues. Functionally, hemopressin acts as an antagonist peptide of the cannabinoid receptor CNR1. Hemopressin-binding efficiently blocks cannabinoid receptor CNR1 and subsequent signaling. The chain is Hemoglobin subunit alpha (HBA) from Macaca fuscata fuscata (Japanese macaque).